Reading from the N-terminus, the 284-residue chain is 2-dehydro-3-deoxyphosphooctonate aldolase (284 aa).

The protein belongs to the KdsA family.

The protein localises to the cytoplasm. The enzyme catalyses D-arabinose 5-phosphate + phosphoenolpyruvate + H2O = 3-deoxy-alpha-D-manno-2-octulosonate-8-phosphate + phosphate. The protein operates within carbohydrate biosynthesis; 3-deoxy-D-manno-octulosonate biosynthesis; 3-deoxy-D-manno-octulosonate from D-ribulose 5-phosphate: step 2/3. It participates in bacterial outer membrane biogenesis; lipopolysaccharide biosynthesis. This chain is 2-dehydro-3-deoxyphosphooctonate aldolase, found in Citrobacter koseri (strain ATCC BAA-895 / CDC 4225-83 / SGSC4696).